A 102-amino-acid chain; its full sequence is Probable endoribonuclease MazF2 (102 aa).

This sequence belongs to the PemK/MazF family. Forms a complex with cognate antitoxin MazE2.

Toxic component of a type II toxin-antitoxin (TA) system. Acts as an endoribonuclease. Neutralized by coexpression with cognate antitoxin MazE2. This chain is Probable endoribonuclease MazF2 (mazF2), found in Mycobacterium tuberculosis (strain CDC 1551 / Oshkosh).